Reading from the N-terminus, the 627-residue chain is F-box only protein 21 (627 aa).

Residues 27 to 76 form the F-box domain; the sequence is PSCLVQLPGEVLEYILCSGSLTALDIGRVSSTCRRLREVCQSSGQVWKEQ.

As to quaternary structure, directly interacts with SKP1 and CUL1.

In terms of biological role, substrate-recognition component of the SCF (SKP1-CUL1-F-box protein)-type E3 ubiquitin ligase complex. The sequence is that of F-box only protein 21 (Fbxo21) from Mus musculus (Mouse).